The chain runs to 1117 residues: MCIVKTLHLITHVMKEYNSQFTEGSDFSLIEEQILEFWKENNIFKKSIENRDEKRRFIFYDGPPFANGLPHYGHLLTGFIKDTVARYKTMAGFRVDRRFGWDCHGLPAEMLAEKELGVSGKLAIEKFGIEKFNNYCRNSVMKFSREWKQYIDRQSRWVDFENDYKTMNLSFMESIMWSFYQLWQKGLIYESIKIVPYSWACQTPLSNFETRIDNAYRQKTSKTVTLAFELLDAPKSLIVDNITAYKILVWTTTPWTLPCNLALAISPNIKYCGAIINKEMYIFSRAYLKNFEDHCRKNNIEYLIHNGDICYLSLEYLSYKPVFNYFIDIKNAFKVLVADFVVEDEGTGIVHMAPGFGEDDFILCKKQGIPDIDDKDTSKLLATICPIDDGGKFTERISDFVNMHVFDTNDQIISILKAKNLCFKTDQYLHNYPHCWRTDTPLIYRAMSSWYVEVTKIKNRMIDLNKDVNWIPSHIRSGQFGKWLENAKDWAISRNRFWGTPLPVWKSDNPNYPRVDVYGSIKKVFDDIKALEEDFDIPIDDLHRPYIDNLVRPNPDDPTGKSMMRRVTDVFDCWFESGSMPYAQLHYPFENKELFENYFPADFITEYVAQTRGWFYTLFVLSTALFDKPPFKNCICHGVVLDTQGQKLSKRLNNYADPMEIFKQYGSDAMRFLMLSHTVSYGGDLLLDKDGVMVRDVIRNVIKPMWNSYNFFTIYADIDKVNARVISDLDEVDNIMDKYIMCECISTIQSIFNAMEEFDQSVGNYGYNIKAACNSIVQFFEVLNNWYIRRCRSRFWSSEITKDKVNAYNTLYTVMYYMVKVSAPFLPAITEAIWQKLNFQEEESVHLSLLPNIEHITLKDEDQKNIQYMKLIINICGCVLSIRNVRNIRVRQPLNKITIYSYNNNDLFNLPVKYQNILLDEINVKSIVFKSNIEDIASFQLKLNFPELGKRIPEKMKNLISLLKSNQWKILENGQLMLGIREGEHYILEDNEYTLNLKVHSEFASTITLGPNLLGVLVLDNTLTDELIMEGIARDIVRIIQQSRKDNKFNVSDKIDVVICTQDKMVKNSVQAWYEYIVQQTLSLSLVIYENLDANNVAEYCKTTMKDRNLTLFIKKL.

The 'HIGH' region signature appears at 64 to 74; it reads PFANGLPHYGH. Positions 647-651 match the 'KMSKS' region motif; the sequence is KLSKR. Lys650 lines the ATP pocket.

The protein belongs to the class-I aminoacyl-tRNA synthetase family. IleS type 2 subfamily. In terms of assembly, monomer. Zn(2+) is required as a cofactor.

It is found in the cytoplasm. It catalyses the reaction tRNA(Ile) + L-isoleucine + ATP = L-isoleucyl-tRNA(Ile) + AMP + diphosphate. Catalyzes the attachment of isoleucine to tRNA(Ile). As IleRS can inadvertently accommodate and process structurally similar amino acids such as valine, to avoid such errors it has two additional distinct tRNA(Ile)-dependent editing activities. One activity is designated as 'pretransfer' editing and involves the hydrolysis of activated Val-AMP. The other activity is designated 'posttransfer' editing and involves deacylation of mischarged Val-tRNA(Ile). This Ehrlichia ruminantium (strain Welgevonden) protein is Isoleucine--tRNA ligase.